An 808-amino-acid chain; its full sequence is uncharacterized protein (808 aa).

35 to 42 (GPNNVGKT) provides a ligand contact to ATP.

This is an uncharacterized protein from Methanocaldococcus jannaschii (strain ATCC 43067 / DSM 2661 / JAL-1 / JCM 10045 / NBRC 100440) (Methanococcus jannaschii).